The primary structure comprises 132 residues: L-ectoine synthase (132 aa).

Belongs to the ectoine synthase family.

It carries out the reaction (2S)-4-acetamido-2-aminobutanoate = L-ectoine + H2O. It functions in the pathway amine and polyamine biosynthesis; ectoine biosynthesis; L-ectoine from L-aspartate 4-semialdehyde: step 3/3. In terms of biological role, catalyzes the circularization of gamma-N-acetyl-alpha,gamma-diaminobutyric acid (ADABA) to ectoine (1,4,5,6-tetrahydro-2-methyl-4-pyrimidine carboxylic acid), which is an excellent osmoprotectant. This chain is L-ectoine synthase, found in Teredinibacter turnerae (strain ATCC 39867 / T7901).